A 375-amino-acid polypeptide reads, in one-letter code: Vasculin (375 aa).

Disordered regions lie at residues 49-109 (SSDA…TSEI) and 356-375 (DSVQ…SDDE). Residues 96 to 108 (MKSQLHSENNTSE) are compositionally biased toward polar residues. Residues 365 to 375 (TSSSSDTSDDE) are compositionally biased toward low complexity.

This sequence belongs to the vasculin family.

It localises to the nucleus. Its function is as follows. Functions as a GC-rich promoter-specific transactivating transcription factor. The polypeptide is Vasculin (gpbp1) (Xenopus tropicalis (Western clawed frog)).